A 457-amino-acid chain; its full sequence is ATP synthase subunit beta (457 aa).

147–154 (GGAGVGKT) serves as a coordination point for ATP.

The protein belongs to the ATPase alpha/beta chains family. F-type ATPases have 2 components, CF(1) - the catalytic core - and CF(0) - the membrane proton channel. CF(1) has five subunits: alpha(3), beta(3), gamma(1), delta(1), epsilon(1). CF(0) has three main subunits: a(1), b(2) and c(9-12). The alpha and beta chains form an alternating ring which encloses part of the gamma chain. CF(1) is attached to CF(0) by a central stalk formed by the gamma and epsilon chains, while a peripheral stalk is formed by the delta and b chains.

It localises to the cell inner membrane. It carries out the reaction ATP + H2O + 4 H(+)(in) = ADP + phosphate + 5 H(+)(out). Produces ATP from ADP in the presence of a proton gradient across the membrane. The catalytic sites are hosted primarily by the beta subunits. The chain is ATP synthase subunit beta from Actinobacillus pleuropneumoniae serotype 3 (strain JL03).